The primary structure comprises 150 residues: Cytochrome c oxidase subunit 5A, mitochondrial (150 aa).

Residues 1–41 constitute a mitochondrion transit peptide; sequence MLGAALRRCAVAATAWAGPRGLLHSAPTPGPAAAIHSVRCY. The SIFI-degron motif lies at 2-17; sequence LGAALRRCAVAATAWA. An N6-acetyllysine mark is found at Lys87 and Lys113. Phosphothreonine is present on Thr141.

It belongs to the cytochrome c oxidase subunit 5A family. As to quaternary structure, component of the cytochrome c oxidase (complex IV, CIV), a multisubunit enzyme composed of 14 subunits. The complex is composed of a catalytic core of 3 subunits MT-CO1, MT-CO2 and MT-CO3, encoded in the mitochondrial DNA, and 11 supernumerary subunits COX4I, COX5A, COX5B, COX6A, COX6B, COX6C, COX7A, COX7B, COX7C, COX8 and NDUFA4, which are encoded in the nuclear genome. The complex exists as a monomer or a dimer and forms supercomplexes (SCs) in the inner mitochondrial membrane with NADH-ubiquinone oxidoreductase (complex I, CI) and ubiquinol-cytochrome c oxidoreductase (cytochrome b-c1 complex, complex III, CIII), resulting in different assemblies (supercomplex SCI(1)III(2)IV(1) and megacomplex MCI(2)III(2)IV(2)). Interacts with AFG1L. Interacts with RAB5IF. Post-translationally, in response to mitochondrial stress, the precursor protein is ubiquitinated by the SIFI complex in the cytoplasm before mitochondrial import, leading to its degradation. Within the SIFI complex, UBR4 initiates ubiquitin chain that are further elongated or branched by KCMF1.

The protein resides in the mitochondrion inner membrane. It participates in energy metabolism; oxidative phosphorylation. Component of the cytochrome c oxidase, the last enzyme in the mitochondrial electron transport chain which drives oxidative phosphorylation. The respiratory chain contains 3 multisubunit complexes succinate dehydrogenase (complex II, CII), ubiquinol-cytochrome c oxidoreductase (cytochrome b-c1 complex, complex III, CIII) and cytochrome c oxidase (complex IV, CIV), that cooperate to transfer electrons derived from NADH and succinate to molecular oxygen, creating an electrochemical gradient over the inner membrane that drives transmembrane transport and the ATP synthase. Cytochrome c oxidase is the component of the respiratory chain that catalyzes the reduction of oxygen to water. Electrons originating from reduced cytochrome c in the intermembrane space (IMS) are transferred via the dinuclear copper A center (CU(A)) of subunit 2 and heme A of subunit 1 to the active site in subunit 1, a binuclear center (BNC) formed by heme A3 and copper B (CU(B)). The BNC reduces molecular oxygen to 2 water molecules using 4 electrons from cytochrome c in the IMS and 4 protons from the mitochondrial matrix. This is Cytochrome c oxidase subunit 5A, mitochondrial (COX5A) from Saimiri sciureus (Common squirrel monkey).